The sequence spans 619 residues: Mitochondrial Rho GTPase 1-A (619 aa).

At 1–593 (MRKDVRILLV…TQADLKNSTF (593 aa)) the chain is on the cytoplasmic side. The Miro 1 domain maps to 2-168 (RKDVRILLVG…FYYAQKAVLH (167 aa)). Positions 14, 16, 17, 18, and 19 each coordinate GTP. Threonine 18 lines the Mg(2+) pocket. Mg(2+)-binding residues include proline 35 and aspartate 57. 6 residues coordinate GTP: serine 59, asparagine 118, lysine 119, aspartate 121, alanine 149, and lysine 150. 2 EF-hand domains span residues 184 to 219 (SCIKALTRIFKISDLDNDGILNDNELNFFQRTCFNI) and 304 to 339 (NAYLFLQSVFDKHDKDRDCALSPDELKDLFKVFPYM). Ca(2+) contacts are provided by aspartate 197, aspartate 199, aspartate 201, glutamate 208, aspartate 317, aspartate 319, aspartate 321, alanine 323, and glutamate 328. The 165-residue stretch at 416-580 (RSVFRCNVLG…YTKLTTMAMY (165 aa)) folds into the Miro 2 domain. GTP is bound by residues arginine 427, cysteine 429, glycine 430, lysine 431, serine 432, glycine 433, lysine 447, lysine 529, aspartate 531, threonine 559, and cysteine 560. Position 427 (arginine 427) interacts with Mg(2+). A helical; Anchor for type IV membrane protein membrane pass occupies residues 594-616 (WLRASVGATVFAVLGFAMYKALL). The Mitochondrial intermembrane portion of the chain corresponds to 617–619 (KQR).

This sequence belongs to the mitochondrial Rho GTPase family. Homodimer.

Its subcellular location is the mitochondrion outer membrane. The enzyme catalyses GTP + H2O = GDP + phosphate + H(+). It catalyses the reaction ATP + H2O = ADP + phosphate + H(+). The catalysed reaction is UTP + H2O = UDP + phosphate + H(+). In terms of biological role, atypical mitochondrial nucleoside-triphosphatase (NTPase) involved in mitochondrial trafficking. Probably involved in control of anterograde transport of mitochondria and their subcellular distribution. Can hydrolyze GTP, ATP and UTP. The protein is Mitochondrial Rho GTPase 1-A (rhot1a) of Danio rerio (Zebrafish).